The chain runs to 313 residues: MIGRHKHCIALEDFSREEILEVIDLAASMKEVLQRPIKKVPSLRGKMVVNLFFEASTRTRSSFETAAKILSADALNWTSSSSSVTKGETLVDTAKNLEAMRPDVLVIRHSAGGAPRLVAEHVGCSVVSAGDGAHEHPSQGLLDCFTLREKLGTLEGKTVAIVGDVSHSRVARSDLHAFPKLGAKVRLCGPPTMMPAGVERLGATVHTDLREAVDGADAVIMLRIQHERIGDPLIPGTREYSKVWGLNAKKAADWLKPSCVILHPGPINRGVELSPEVADGPRSVILDQVQNGVAVRMAILYLLAGGAGEEARA.

Carbamoyl phosphate-binding residues include Arg58 and Thr59. Residue Lys86 coordinates L-aspartate. Carbamoyl phosphate is bound by residues Arg108, His136, and Gln139. 2 residues coordinate L-aspartate: Arg169 and Arg223. Carbamoyl phosphate contacts are provided by Gly265 and Pro266.

It belongs to the aspartate/ornithine carbamoyltransferase superfamily. ATCase family. In terms of assembly, heterododecamer (2C3:3R2) of six catalytic PyrB chains organized as two trimers (C3), and six regulatory PyrI chains organized as three dimers (R2).

The enzyme catalyses carbamoyl phosphate + L-aspartate = N-carbamoyl-L-aspartate + phosphate + H(+). Its pathway is pyrimidine metabolism; UMP biosynthesis via de novo pathway; (S)-dihydroorotate from bicarbonate: step 2/3. In terms of biological role, catalyzes the condensation of carbamoyl phosphate and aspartate to form carbamoyl aspartate and inorganic phosphate, the committed step in the de novo pyrimidine nucleotide biosynthesis pathway. This chain is Aspartate carbamoyltransferase catalytic subunit, found in Anaeromyxobacter dehalogenans (strain 2CP-1 / ATCC BAA-258).